The primary structure comprises 128 residues: Cytochrome c-type biogenesis protein CcmE (128 aa).

Over 1 to 8 (MQKIVRNR) the chain is Cytoplasmic. The helical; Signal-anchor for type II membrane protein transmembrane segment at 9–29 (LIKIILCFCSTCLGISIILYN) threads the bilayer. The Periplasmic portion of the chain corresponds to 30–128 (LEKNIIFFFP…KHDENYRPPS (99 aa)). Heme contacts are provided by His120 and Tyr124.

It belongs to the CcmE/CycJ family.

The protein resides in the cell inner membrane. Heme chaperone required for the biogenesis of c-type cytochromes. Transiently binds heme delivered by CcmC and transfers the heme to apo-cytochromes in a process facilitated by CcmF and CcmH. In Rickettsia typhi (strain ATCC VR-144 / Wilmington), this protein is Cytochrome c-type biogenesis protein CcmE.